The sequence spans 703 residues: Polyribonucleotide nucleotidyltransferase (703 aa).

Residues Asp488 and Asp494 each contribute to the Mg(2+) site. The 60-residue stretch at 555–614 folds into the KH domain; that stretch reads PKIVKMQINPDKIKDVIGPGGKIITKIIDETGVKIDIEQTGEVFISGIEIDMIKKAQELI. Residues 624–692 enclose the S1 motif domain; sequence GKTYKGKVSR…EKGRVNLSRK (69 aa).

This sequence belongs to the polyribonucleotide nucleotidyltransferase family. The cofactor is Mg(2+).

The protein localises to the cytoplasm. It carries out the reaction RNA(n+1) + phosphate = RNA(n) + a ribonucleoside 5'-diphosphate. Functionally, involved in mRNA degradation. Catalyzes the phosphorolysis of single-stranded polyribonucleotides processively in the 3'- to 5'-direction. In Clostridioides difficile (strain 630) (Peptoclostridium difficile), this protein is Polyribonucleotide nucleotidyltransferase.